A 120-amino-acid polypeptide reads, in one-letter code: NAD(P)H-quinone oxidoreductase subunit 3 (120 aa).

The next 3 helical transmembrane spans lie at 10 to 32, 64 to 84, and 89 to 109; these read LLGF…KVLR, MFAL…PWAV, and LGVL…VGLV.

This sequence belongs to the complex I subunit 3 family. As to quaternary structure, NDH-1 can be composed of about 15 different subunits; different subcomplexes with different compositions have been identified which probably have different functions.

It is found in the cellular thylakoid membrane. The enzyme catalyses a plastoquinone + NADH + (n+1) H(+)(in) = a plastoquinol + NAD(+) + n H(+)(out). It catalyses the reaction a plastoquinone + NADPH + (n+1) H(+)(in) = a plastoquinol + NADP(+) + n H(+)(out). In terms of biological role, NDH-1 shuttles electrons from an unknown electron donor, via FMN and iron-sulfur (Fe-S) centers, to quinones in the respiratory and/or the photosynthetic chain. The immediate electron acceptor for the enzyme in this species is believed to be plastoquinone. Couples the redox reaction to proton translocation, and thus conserves the redox energy in a proton gradient. Cyanobacterial NDH-1 also plays a role in inorganic carbon-concentration. The chain is NAD(P)H-quinone oxidoreductase subunit 3 from Acaryochloris marina (strain MBIC 11017).